The chain runs to 453 residues: Regulatory protein opaque-2 (453 aa).

A disordered region spans residues Ser145–Arg243. A compositionally biased stretch (polar residues) spans Ser146–Leu175. Over residues Pro207–Val216 the composition is skewed to acidic residues. Residues Pro224 to Arg240 show a composition bias toward basic and acidic residues. The bZIP domain maps to Thr225–Leu288. The tract at residues Arg228–Lys251 is basic motif. Positions Leu253–Leu274 are leucine-zipper.

It belongs to the bZIP family. As to quaternary structure, interacts with the Dof zinc finger protein PBF. Seed endosperm.

Its subcellular location is the nucleus. Its function is as follows. Involved in the regulation of the endosperm-specific production of albumin b-32 and other zein proteins. It is a trans-acting transcriptional activator that binds to the consensus sequence 5'-GATGAYRTGR-3'. The sequence is that of Regulatory protein opaque-2 (O2) from Zea mays (Maize).